The primary structure comprises 271 residues: UPF0328 protein ECU09_0020 (271 aa).

The protein belongs to the UPF0328 family.

The polypeptide is UPF0328 protein ECU09_0020 (Encephalitozoon cuniculi (strain GB-M1) (Microsporidian parasite)).